A 317-amino-acid chain; its full sequence is UV DNA damage endonuclease (317 aa).

This sequence belongs to the uve1/UvsE family.

Component in a DNA repair pathway. Removal of UV LIGHT damaged nucleotides. Recognizes pyrimidine dimers and cleave a phosphodiester bond immediately 5' to the lesion. The protein is UV DNA damage endonuclease of Bacillus cereus (strain ATCC 10987 / NRS 248).